The primary structure comprises 428 residues: MAMITDIYAREIMDSRGNPTVEVEVYLEDGSMGRADVPSGASTGAYEAVELRDGDKSRYLGKGVLKAVENVNEIIAPELIGMDALDQVGIDMAMIQLDGTPNKGKLGANAILGVSMAVARAAAESLGVPLYNYLGGFNARMLPVPMMNILNGGKHADNTVDIQEFMVMPVGATSFKEALRTGAEIFHSLKKVLGEKGLSTAVGDEGGFAPNLKSNEEAITTILDAIKAAGYEPGKDVFLALDVAATEMFKDGKYHFEGEGVVKTTEEMIAFYEDLVNKYPIISIEDGLSEDDWDGWKALTDKLGSKVQLVGDDLFVTNTERLARGIETSTGNSILVKVNQIGTLTETFEAIEMAKLAGYTAVISHRSGETEDSTISDIAVATNAGQIKTGAPSRTDRVAKYNQLLRIEDELADTARFGGRSAFYNLKK.

Gln-163 is a (2R)-2-phosphoglycerate binding site. The Proton donor role is filled by Glu-205. Positions 242, 285, and 312 each coordinate Mg(2+). (2R)-2-phosphoglycerate is bound by residues Lys-337, Arg-366, Ser-367, and Lys-388. The active-site Proton acceptor is the Lys-337.

This sequence belongs to the enolase family. It depends on Mg(2+) as a cofactor.

Its subcellular location is the cytoplasm. The protein localises to the secreted. It localises to the cell surface. The enzyme catalyses (2R)-2-phosphoglycerate = phosphoenolpyruvate + H2O. The protein operates within carbohydrate degradation; glycolysis; pyruvate from D-glyceraldehyde 3-phosphate: step 4/5. Its function is as follows. Catalyzes the reversible conversion of 2-phosphoglycerate (2-PG) into phosphoenolpyruvate (PEP). It is essential for the degradation of carbohydrates via glycolysis. In Brevibacillus brevis (strain 47 / JCM 6285 / NBRC 100599), this protein is Enolase.